Consider the following 254-residue polypeptide: MLTIADKTFQSRLFTGTGKFANKHLMASAIEASGSQLATMALKRVDIRSEQDDILQPIIDAGVNLLPNTSGAKNAKDAIFAAHLAREALGTNWLKLEIHPDPKYLMPDPIETLKAAEQLVKDGFVVLPYCHADPVLCKRLEEVGCAAVMPLGAPIGSNKGIASADFLEIIIDQANVPVIVDAGIGAPSHAARAMEMGADAVLVNTAIAASQQPVEMAIAFKLAVEAGRMAYLAGLAGKVSHAVASSPLTSFLDE.

The Schiff-base intermediate with DXP role is filled by K95. 1-deoxy-D-xylulose 5-phosphate contacts are provided by residues G156, 182 to 183 (AG), and 204 to 205 (NT).

The protein belongs to the ThiG family. In terms of assembly, homotetramer. Forms heterodimers with either ThiH or ThiS.

It is found in the cytoplasm. The catalysed reaction is [ThiS sulfur-carrier protein]-C-terminal-Gly-aminoethanethioate + 2-iminoacetate + 1-deoxy-D-xylulose 5-phosphate = [ThiS sulfur-carrier protein]-C-terminal Gly-Gly + 2-[(2R,5Z)-2-carboxy-4-methylthiazol-5(2H)-ylidene]ethyl phosphate + 2 H2O + H(+). The protein operates within cofactor biosynthesis; thiamine diphosphate biosynthesis. Catalyzes the rearrangement of 1-deoxy-D-xylulose 5-phosphate (DXP) to produce the thiazole phosphate moiety of thiamine. Sulfur is provided by the thiocarboxylate moiety of the carrier protein ThiS. In vitro, sulfur can be provided by H(2)S. The chain is Thiazole synthase from Vibrio atlanticus (strain LGP32) (Vibrio splendidus (strain Mel32)).